We begin with the raw amino-acid sequence, 202 residues long: LexA repressor (202 aa).

Residues 28 to 48 (RAEIAQRLGFRSPNAAEEHLK) constitute a DNA-binding region (H-T-H motif). Active-site for autocatalytic cleavage activity residues include Ser119 and Lys156.

Belongs to the peptidase S24 family. As to quaternary structure, homodimer.

The enzyme catalyses Hydrolysis of Ala-|-Gly bond in repressor LexA.. Represses a number of genes involved in the response to DNA damage (SOS response), including recA and lexA. Binds to the 16 bp palindromic sequence 5'-CTGTATATATATACAG-3'. In the presence of single-stranded DNA, RecA interacts with LexA causing an autocatalytic cleavage which disrupts the DNA-binding part of LexA, leading to derepression of the SOS regulon and eventually DNA repair. This Edwardsiella ictaluri (strain 93-146) protein is LexA repressor.